The following is a 174-amino-acid chain: Protein-export protein SecB (174 aa).

Belongs to the SecB family. Homotetramer, a dimer of dimers. One homotetramer interacts with 1 SecA dimer.

The protein resides in the cytoplasm. One of the proteins required for the normal export of preproteins out of the cell cytoplasm. It is a molecular chaperone that binds to a subset of precursor proteins, maintaining them in a translocation-competent state. It also specifically binds to its receptor SecA. This is Protein-export protein SecB from Ehrlichia ruminantium (strain Gardel).